Reading from the N-terminus, the 337-residue chain is Glyceraldehyde-3-phosphate dehydrogenase 1 (337 aa).

Residues 12–13 (RI), D34, and R79 contribute to the NAD(+) site. D-glyceraldehyde 3-phosphate contacts are provided by residues 150 to 152 (SCT), T181, 210 to 211 (TG), and R233. The Nucleophile role is filled by C151. Position 315 (N315) interacts with NAD(+).

It belongs to the glyceraldehyde-3-phosphate dehydrogenase family. In terms of assembly, homotetramer.

It localises to the cytoplasm. It carries out the reaction D-glyceraldehyde 3-phosphate + phosphate + NAD(+) = (2R)-3-phospho-glyceroyl phosphate + NADH + H(+). It participates in carbohydrate degradation; glycolysis; pyruvate from D-glyceraldehyde 3-phosphate: step 1/5. This chain is Glyceraldehyde-3-phosphate dehydrogenase 1 (GPD1), found in Mucor circinelloides f. lusitanicus (Mucor racemosus var. lusitanicus).